The primary structure comprises 101 residues: MVNLTPIMIEGQPFTAVTVKLPKTNFMAVANDHGYIMCGALDVALLNEKLKERGIVAGRAVGVRTIDQLLDAPLESVTYAAEDLGIKVGMSGREALLKMMK.

This is an uncharacterized protein from Bacillus subtilis (strain 168).